The primary structure comprises 389 residues: MNIHEYQGKEILRKYNVPVPRGIPAFSVAEALKAAEELGGPVWVVKAQIHAGGRGKGGGVKVAKSIDDVKTYATNILGMQLVTHQTGPEGKKVNRLLIEEGADIKKELYVSLVVDRVSQKIALMASSEGGMDIEEVAAHTPEKIHTLIIEPSTGLTDADADDIARKIGVPDASVAQARQALQGLYKAFYDTDASLAEINPLILTGEGKVIALDAKFNFDSNALFRHPEIVAYRDLDEEDANEIEASKFDLAYISLDGNIGCLVNGAGLAMATMDTIKLFGGEPANFLDVGGGATTEKVTEAFKLMLKNPNVEAILVNIFGGIMRCDVIAEGVISASKAVNLTVPLVVRMKGTNEDLGKKMLADSGLPIIAADTMEEAAQKVVAAAAGKK.

The ATP-grasp domain maps to 9–244 (KEILRKYNVP…LDEEDANEIE (236 aa)). ATP is bound by residues lysine 46, 53–55 (GRG), glutamate 99, alanine 102, and glutamate 107. 2 residues coordinate Mg(2+): asparagine 199 and aspartate 213. Residues asparagine 264 and 321–323 (GIM) each bind substrate.

Belongs to the succinate/malate CoA ligase beta subunit family. In terms of assembly, heterotetramer of two alpha and two beta subunits. It depends on Mg(2+) as a cofactor.

It catalyses the reaction succinate + ATP + CoA = succinyl-CoA + ADP + phosphate. The catalysed reaction is GTP + succinate + CoA = succinyl-CoA + GDP + phosphate. Its pathway is carbohydrate metabolism; tricarboxylic acid cycle; succinate from succinyl-CoA (ligase route): step 1/1. Functionally, succinyl-CoA synthetase functions in the citric acid cycle (TCA), coupling the hydrolysis of succinyl-CoA to the synthesis of either ATP or GTP and thus represents the only step of substrate-level phosphorylation in the TCA. The beta subunit provides nucleotide specificity of the enzyme and binds the substrate succinate, while the binding sites for coenzyme A and phosphate are found in the alpha subunit. In Cupriavidus pinatubonensis (strain JMP 134 / LMG 1197) (Cupriavidus necator (strain JMP 134)), this protein is Succinate--CoA ligase [ADP-forming] subunit beta.